A 108-amino-acid polypeptide reads, in one-letter code: Glutaredoxin-1 (108 aa).

Positions 3–106 constitute a Glutaredoxin domain; the sequence is EEFVQQRLAN…DILSSIGVLR (104 aa). An intrachain disulfide couples cysteine 23 to cysteine 26.

Belongs to the glutaredoxin family.

It is found in the virion. Its function is as follows. Has thioltransferase and dehydroascorbate reductase activities. This is Glutaredoxin-1 (OPG075) from Camelpox virus (strain M-96).